We begin with the raw amino-acid sequence, 244 residues long: 14-3-3 protein homolog 1 (244 aa).

The protein belongs to the 14-3-3 family.

The sequence is that of 14-3-3 protein homolog 1 from Echinococcus multilocularis (Fox tapeworm).